A 565-amino-acid chain; its full sequence is Periplasmic trehalase (565 aa).

The signal sequence occupies residues 1–30 (MKSPAPSRPQKMALIPACIFLYFAALSVQA). Substrate is bound by residues R152, 159 to 160 (WD), N196, 205 to 207 (RSQ), 277 to 279 (RPE), and G310. Catalysis depends on proton donor/acceptor residues D312 and E496. E511 provides a ligand contact to substrate. The disordered stretch occupies residues 540-565 (DNVPATHPTVKSATTQPSTKEAQPTP). Residues 548-565 (TVKSATTQPSTKEAQPTP) are compositionally biased toward polar residues.

This sequence belongs to the glycosyl hydrolase 37 family. In terms of assembly, monomer.

It localises to the periplasm. The enzyme catalyses alpha,alpha-trehalose + H2O = alpha-D-glucose + beta-D-glucose. In terms of biological role, provides the cells with the ability to utilize trehalose at high osmolarity by splitting it into glucose molecules that can subsequently be taken up by the phosphotransferase-mediated uptake system. This Shigella flexneri serotype 5b (strain 8401) protein is Periplasmic trehalase.